A 571-amino-acid chain; its full sequence is Glutamate--tRNA ligase (571 aa).

The span at Gly-75–Leu-88 shows a compositional bias: basic and acidic residues. The disordered stretch occupies residues Gly-75 to Asn-98. Residues Pro-105 to His-115 carry the 'HIGH' region motif.

The protein belongs to the class-I aminoacyl-tRNA synthetase family. Glutamate--tRNA ligase type 2 subfamily.

Its subcellular location is the cytoplasm. It catalyses the reaction tRNA(Glu) + L-glutamate + ATP = L-glutamyl-tRNA(Glu) + AMP + diphosphate. Catalyzes the attachment of glutamate to tRNA(Glu) in a two-step reaction: glutamate is first activated by ATP to form Glu-AMP and then transferred to the acceptor end of tRNA(Glu). The protein is Glutamate--tRNA ligase of Methanopyrus kandleri (strain AV19 / DSM 6324 / JCM 9639 / NBRC 100938).